The following is an 807-amino-acid chain: 1-phosphatidylinositol 4,5-bisphosphate phosphodiesterase delta-4 (807 aa).

Residues 16-124 (LLMQEGTMMR…WMRGLQLLVD (109 aa)) enclose the PH domain. The substrate binding stretch occupies residues 26-53 (KVRTKSWKKLRYFRLQNDGMTVWHGSQP). 3 EF-hand domains span residues 134-169 (QMDQMLNEWFQQADRNQDGRMSFREAQRLLLLMNVE), 170-205 (MDEEYAFSLFQEADVTQSDDLGSEEFVQFYKALTKR), and 203-237 (TKRTEIEEIFEDFSSDKQKLTLLEFVDFLRKEQKE). The Ca(2+) site is built by D147, N149, D151, R153, E158, D183, S187, D189, and E194. The GBA signature appears at 213-243 (EDFSSDKQKLTLLEFVDFLRKEQKEKDHAPD). The PI-PLC X-box domain occupies 290 to 435 (QDMTQPLSHY…LRGKILVKGK (146 aa)). H305 is a catalytic residue. N306, E335, and D337 together coordinate Ca(2+). The active site involves H350. E384 provides a ligand contact to Ca(2+). Residues K433 and K435 each coordinate substrate. Positions 442–490 (VDKEEEEEEEEEELEKDEGPDLDPASPELDTQPQPETQGQAAGNKKERK) are disordered. Positions 443–462 (DKEEEEEEEEEELEKDEGPD) are enriched in acidic residues. The span at 470–482 (LDTQPQPETQGQA) shows a compositional bias: polar residues. One can recognise a PI-PLC Y-box domain in the interval 538 to 654 (LSALVVYLRT…GYVLKPEFLR (117 aa)). 2 residues coordinate substrate: S567 and R594. The C2 domain maps to 654–781 (RDTQSSFNPE…QGYRHVSLLS (128 aa)). Ca(2+) contacts are provided by D697, N721, D750, and Y751. A PDZ-binding motif is present at residues 776-779 (HVSL).

Interacts with GRIP1. Interacts (via GBA motif) with guanine nucleotide-binding protein G(i) alpha subunit GNAI3 (inactive GDP-bound form)l low-affinity interaction. The cofactor is Ca(2+).

The protein localises to the membrane. The protein resides in the nucleus. It is found in the cytoplasm. Its subcellular location is the endoplasmic reticulum. The enzyme catalyses a 1,2-diacyl-sn-glycero-3-phospho-(1D-myo-inositol-4,5-bisphosphate) + H2O = 1D-myo-inositol 1,4,5-trisphosphate + a 1,2-diacyl-sn-glycerol + H(+). It catalyses the reaction a 1,2-diacyl-sn-glycero-3-phospho-(1D-myo-inositol) + H2O = 1D-myo-inositol 1-phosphate + a 1,2-diacyl-sn-glycerol + H(+). Functionally, hydrolyzes the phosphatidylinositol 4,5-bisphosphate (PIP2) to generate 2 second messenger molecules diacylglycerol (DAG) and inositol 1,4,5-trisphosphate (IP3). DAG mediates the activation of protein kinase C (PKC), while IP3 releases Ca(2+) from intracellular stores. Required for acrosome reaction in sperm during fertilization, probably by acting as an important enzyme for intracellular Ca(2+) mobilization in the zona pellucida-induced acrosome reaction. May play a role in cell growth. Modulates the liver regeneration in cooperation with nuclear PKC. Overexpression up-regulates the Erk signaling pathway and proliferation. The protein is 1-phosphatidylinositol 4,5-bisphosphate phosphodiesterase delta-4 of Mus musculus (Mouse).